The following is a 346-amino-acid chain: tRNA-specific 2-thiouridylase MnmA (346 aa).

A6 to S13 lines the ATP pocket. C90 (nucleophile) is an active-site residue. C90 and C187 are oxidised to a cystine. Residue G114 participates in ATP binding. The interval K137–Q139 is interaction with tRNA. C187 acts as the Cysteine persulfide intermediate in catalysis. An interaction with tRNA region spans residues R292–Y293.

The protein belongs to the MnmA/TRMU family.

The protein localises to the cytoplasm. It catalyses the reaction S-sulfanyl-L-cysteinyl-[protein] + uridine(34) in tRNA + AH2 + ATP = 2-thiouridine(34) in tRNA + L-cysteinyl-[protein] + A + AMP + diphosphate + H(+). In terms of biological role, catalyzes the 2-thiolation of uridine at the wobble position (U34) of tRNA, leading to the formation of s(2)U34. The sequence is that of tRNA-specific 2-thiouridylase MnmA from Nitratidesulfovibrio vulgaris (strain ATCC 29579 / DSM 644 / CCUG 34227 / NCIMB 8303 / VKM B-1760 / Hildenborough) (Desulfovibrio vulgaris).